The sequence spans 368 residues: tRNA/tmRNA (uracil-C(5))-methyltransferase (368 aa).

5 residues coordinate S-adenosyl-L-methionine: Gln192, Tyr220, Asn225, Glu241, and Asp301. The Nucleophile role is filled by Cys326. Catalysis depends on Glu360, which acts as the Proton acceptor.

It belongs to the class I-like SAM-binding methyltransferase superfamily. RNA M5U methyltransferase family. TrmA subfamily.

The catalysed reaction is uridine(54) in tRNA + S-adenosyl-L-methionine = 5-methyluridine(54) in tRNA + S-adenosyl-L-homocysteine + H(+). The enzyme catalyses uridine(341) in tmRNA + S-adenosyl-L-methionine = 5-methyluridine(341) in tmRNA + S-adenosyl-L-homocysteine + H(+). In terms of biological role, dual-specificity methyltransferase that catalyzes the formation of 5-methyluridine at position 54 (m5U54) in all tRNAs, and that of position 341 (m5U341) in tmRNA (transfer-mRNA). The chain is tRNA/tmRNA (uracil-C(5))-methyltransferase from Actinobacillus pleuropneumoniae serotype 3 (strain JL03).